Consider the following 1682-residue polypeptide: MADLEVYKNLSPEKVERCMSVMQSGTQMIKLKRGTKGLVRLFYLDEHRTRLRWRPSRKSEKAKILIDSIYKVTEGRQSEIFHRQAEGNFDPSCCFTIYHGNHMESLDLITSNPEEARTWITGLKYLMAGISDEDSLAKRQRTHDQWVKQTFEEADKNGDGLLNIEEIHQLMHKLNVNLPRRKVRQMFQEADTDENQGTLTFEEFCVFYKMMSLRRDLYLLLLSYSDKKDHLTVEELAQFLKVEQKMSNVTLDYCLDIIMKFEVSEENKVKNVLGIEGFTNFMRSPACDVFNPLHHEVYQDMDQPLCNYYIASSHNTYLTGDQLLSQSKVDMYARVLQEGCRCVEVDCWDGPDGEPVVHHGYTLTSKILFRDVVETINKHAFVKNEFPVILSIENHCSIQQQRKIAQYLKGILQDKLDLSSVDTGECRQLPSPQSLKGKILVKGKKLPYHLGDDAEEGEVSDEDSADEIEDECKFKLHYSNGTTEHQVESFIRKKLESLLKESQIRDKEDPDSFTVRALLKATHEGLNAHLKQNLDVKESGKKSHGRSLMANFGKHKQKATKSRSKSYSTDDEDDSLQNPGKEGGQLYRLGRRRRTMKLCRELSDLVVYTNSVAAQDIVDDGTTGNVLSFSETRAHQVVQQKSEQFMIYNQKQLTRIYPSAYRIDSSNFNPLPYWNAGCQLVALNYQSEGRMMQINRAKFKANGNCGYILKPQQMCKGTFNPFSGDPLPANPKKQLILKVISGQQLPKPPDSMFGDRGEIIDPFVEVEIIGLPVDCCKDQTRVVDDNGFNPVWEETLTFTVHMPEIALVRFLVWDHDPIGRDFVGQRTVTFSSLVPGYRHVYLEGLTEASIFVHITINEIFGKWSPLILNPSYTILHFLGATKNRQLQGLKGLFNKNPRHASSENNSHYVRKRSIGDRILRRTASAPAKGRKKSKVGFQEMVEIKDSVSEASRDQDGVLRRTTRSLQVRPVSMPVDKSLLGALSLPISEAAKDTDGKENCLAGDKDDRRKGAATRKDPHFSNFNKKLSSSSSALLHKDANQGPTASVSNPEQCGGRGAKSERIKPNMTNDCQENHNPPKFLSPRKHLALDPATKGLQERLHGMKTNEKEHAEGFLGEKSMLSGSVLSQSSLEVENLEGSRAKGRAATSFSLSDVSALCSDIPDLHSTAILQDTEISNLIDDVTLTNENQSGSSISALIGQFEESNHPANVTVVSHLSTSGASGSAPFQTPFKHGLSQGNQKASFLCSSPELNKLSSVETTKLANNAVPCGVIGSPISTPKPGDDPSDKAKTRVIEGNLPGFPDASPGQFPKSPTHGEDHSQVMNSPALSTELAIEDIIADPALSINSAESSLVEIDGESENLSLTTCDYREEAPSQLVSPLKLQQSQEMVEHIQRGLRNGYCKETLLPSEIFNNIPGVKNHSISHLTYQGAGFVYNHFSSSDAKTNQICEPQQPRAPDMHAPTPTPSTHAPLAALKLPSPCKSKSLGDLTSEDIACNFESKYQCISRSFVTNGIRDKSVTMKTKSLEPLDALTEQLRKLVSFDQEDSCQVLYSKQDVNQCPRALVRKLSSRSQSRVRNIASRAKEKQEAGKQKAMAQSTRGGVVLRSKPPAPALAVNRHSTGSYIASYLRNMKAGGLEGRGIPEGACTALRYGYMDQFCSDNSVLQTEPSSEDKPEIYFLLRL.

Positions 20 to 128 (SVMQSGTQMI…WITGLKYLMA (109 aa)) constitute a PH domain. EF-hand domains are found at residues 142-177 (THDQ…LNVN), 178-214 (LPRR…MSLR), and 226-246 (DKKD…EQKM). Residues D155, N157, D159, and E166 each contribute to the Ca(2+) site. The PI-PLC X-box domain maps to 299-444 (QDMDQPLCNY…LKGKILVKGK (146 aa)). H314 is an active-site residue. The Ca(2+) site is built by N315, E344, and D346. H358 is an active-site residue. Residue E393 coordinates Ca(2+). Positions 442 and 444 each coordinate substrate. The disordered stretch occupies residues 534–588 (LDVKESGKKSHGRSLMANFGKHKQKATKSRSKSYSTDDEDDSLQNPGKEGGQLYR). A compositionally biased stretch (basic residues) spans 553–564 (GKHKQKATKSRS). In terms of domain architecture, PI-PLC Y-box spans 602-715 (LSDLVVYTNS…GYILKPQQMC (114 aa)). Positions 628 and 655 each coordinate substrate. Residues 716–844 (KGTFNPFSGD…PGYRHVYLEG (129 aa)) form the C2 domain. Positions 759, 761, 785, 814, 815, and 816 each coordinate Ca(2+). Positions 992–1018 (DTDGKENCLAGDKDDRRKGAATRKDPH) are enriched in basic and acidic residues. Disordered regions lie at residues 992–1083 (DTDG…LSPR), 1296–1321 (NLPG…HSQV), and 1581–1603 (RAKE…GGVV). Residues 1019-1033 (FSNFNKKLSSSSSAL) are compositionally biased toward low complexity. 2 stretches are compositionally biased toward polar residues: residues 1040 to 1050 (QGPTASVSNPE) and 1065 to 1074 (NMTNDCQENH). Basic and acidic residues predominate over residues 1581-1590 (RAKEKQEAGK).

It depends on Ca(2+) as a cofactor. As to expression, expressed in brain and to a lower extent in lung. In brain, it is found in cerebrum, cerebellum and spinal cord.

It is found in the cytoplasm. Its subcellular location is the membrane. The catalysed reaction is a 1,2-diacyl-sn-glycero-3-phospho-(1D-myo-inositol-4,5-bisphosphate) + H2O = 1D-myo-inositol 1,4,5-trisphosphate + a 1,2-diacyl-sn-glycerol + H(+). Functionally, the production of the second messenger molecules diacylglycerol (DAG) and inositol 1,4,5-trisphosphate (IP3) is mediated by calcium-activated phosphatidylinositol-specific phospholipase C enzymes. This chain is 1-phosphatidylinositol 4,5-bisphosphate phosphodiesterase eta-1, found in Mus musculus (Mouse).